The primary structure comprises 395 residues: Serine-type anaerobic sulfatase-maturating enzyme (395 aa).

Positions Pro18–Arg249 constitute a Radical SAM core domain. [4Fe-4S] cluster-binding residues include Cys35 and Cys39. Tyr41 contributes to the S-adenosyl-L-methionine binding site. Cys42 provides a ligand contact to [4Fe-4S] cluster. The S-adenosyl-L-methionine site is built by Gly84 and Arg152. [4Fe-4S] cluster contacts are provided by Cys270, Cys276, and Cys291. Residue Asp292 is the Proton acceptor of the active site. Residues Cys331, Cys334, Cys340, Cys344, and Cys357 each contribute to the [4Fe-4S] cluster site.

The protein belongs to the radical SAM superfamily. Anaerobic sulfatase-maturating enzyme family. In terms of assembly, monomer. Interacts with AtsA prior to its export to the periplasm. This interaction depends on the presence of AtsA 'Ser-72'. Binding of SAM to AtsB promotes the formation of a ternary AtsA-AtsB-SAM complex. Requires [4Fe-4S] cluster as cofactor.

The protein localises to the cytoplasm. The enzyme catalyses L-seryl-[sulfatase] + S-adenosyl-L-methionine = 3-oxo-L-alanyl-[sulfatase] + 5'-deoxyadenosine + L-methionine + H(+). It functions in the pathway protein modification; sulfatase oxidation. Its activity is regulated as follows. Activity is inhibited by iron chelators. In terms of biological role, involved in 'Ser-type' sulfatase maturation under anaerobic conditions. Catalyzes the post-translational modification of serine ('Ser-72' in the arylsulfatase AtsA) into 3-oxoalanine (also known as C(alpha)-formylglycine (FGly)), by a free radical chemical mechanism initiated via the reductive cleavage of S-adenosyl-L-methionine (SAM). Is capable of catalyzing multiple turnovers. In vitro, use of a peptide substrate in which the target serine is changed to cysteine also gives rise to turnover, supporting approximately 4-fold the activity of that observed with the natural substrate. The sequence is that of Serine-type anaerobic sulfatase-maturating enzyme from Klebsiella pneumoniae.